We begin with the raw amino-acid sequence, 74 residues long: ATP synthase subunit c (74 aa).

A run of 2 helical transmembrane segments spans residues 8 to 28 (FIGI…VSNI) and 52 to 72 (IGAG…MLLI).

Belongs to the ATPase C chain family. As to quaternary structure, F-type ATPases have 2 components, F(1) - the catalytic core - and F(0) - the membrane proton channel. F(1) has five subunits: alpha(3), beta(3), gamma(1), delta(1), epsilon(1). F(0) has three main subunits: a(1), b(2) and c(10-14). The alpha and beta chains form an alternating ring which encloses part of the gamma chain. F(1) is attached to F(0) by a central stalk formed by the gamma and epsilon chains, while a peripheral stalk is formed by the delta and b chains.

Its subcellular location is the cell inner membrane. Functionally, f(1)F(0) ATP synthase produces ATP from ADP in the presence of a proton or sodium gradient. F-type ATPases consist of two structural domains, F(1) containing the extramembraneous catalytic core and F(0) containing the membrane proton channel, linked together by a central stalk and a peripheral stalk. During catalysis, ATP synthesis in the catalytic domain of F(1) is coupled via a rotary mechanism of the central stalk subunits to proton translocation. Key component of the F(0) channel; it plays a direct role in translocation across the membrane. A homomeric c-ring of between 10-14 subunits forms the central stalk rotor element with the F(1) delta and epsilon subunits. The sequence is that of ATP synthase subunit c from Rickettsia prowazekii (strain Madrid E).